The sequence spans 459 residues: UDP-glycosyltransferase 79B30 (459 aa).

His18 (proton acceptor) is an active-site residue. An anthocyanidin is bound at residue His18. The active-site Charge relay is the Asp115. Residues Thr136, Val333, Gln335, His350, Ser355, and Glu358 each coordinate UDP-alpha-D-glucose. Gly373 contacts an anthocyanidin. 2 residues coordinate UDP-alpha-D-glucose: Asp374 and Gln375.

This sequence belongs to the UDP-glycosyltransferase family. Expressed in leaves.

It catalyses the reaction a flavonol 3-O-beta-D-glucoside + UDP-alpha-D-glucose = a flavonol 3-O-beta-D-glucosyl-(1-&gt;2)-beta-D-glucoside + UDP + H(+). Functionally, flavonol 3-O-glucoside/galactoside (1-&gt;2) glucosyltransferase converting kaempferol 3-O-glucoside to kaempferol 3-O-sophoroside. Has a broad in vitro activity for kaempferol/ quercetin 3-O-glucoside/galactoside derivatives, but cannot glucosylate kaempferol 3-O-rhamnosyl-(1-&gt;4)-[rhamnosyl-(1-&gt;6)- glucoside] and 3-O-rhamnosyl-(1-&gt;4)-[glucosyl-(1-&gt;6)-glucoside]. Has a higher preference for UDP-glucose than UDP-galactose, and no activity with UDP-arabinose and UDP-glucuronic acid. Represents probably a recessive allele of the gene. The polypeptide is UDP-glycosyltransferase 79B30 (Glycine max (Soybean)).